We begin with the raw amino-acid sequence, 74 residues long: Salivary glue protein Sgs-7 (74 aa).

The signal sequence occupies residues 1 to 23 (MKLIAVTIIACILLIGFSDLALG).

This chain is Salivary glue protein Sgs-7 (Sgs7), found in Drosophila melanogaster (Fruit fly).